The following is a 118-amino-acid chain: Large ribosomal subunit protein uL24 (118 aa).

Residues 1–24 are disordered; that stretch reads MSEQPHKQRTRTKRASLHEKQDQV.

It belongs to the universal ribosomal protein uL24 family. Part of the 50S ribosomal subunit.

Its function is as follows. One of two assembly initiator proteins, it binds directly to the 5'-end of the 23S rRNA, where it nucleates assembly of the 50S subunit. Functionally, located at the polypeptide exit tunnel on the outside of the subunit. This chain is Large ribosomal subunit protein uL24, found in Halobacterium salinarum (strain ATCC 700922 / JCM 11081 / NRC-1) (Halobacterium halobium).